Reading from the N-terminus, the 316-residue chain is Pantothenate kinase (316 aa).

95–102 lines the ATP pocket; it reads GSVAVGKS.

The protein belongs to the prokaryotic pantothenate kinase family.

It is found in the cytoplasm. It catalyses the reaction (R)-pantothenate + ATP = (R)-4'-phosphopantothenate + ADP + H(+). The protein operates within cofactor biosynthesis; coenzyme A biosynthesis; CoA from (R)-pantothenate: step 1/5. The sequence is that of Pantothenate kinase from Shewanella piezotolerans (strain WP3 / JCM 13877).